A 747-amino-acid chain; its full sequence is Elongation factor G, mitochondrial (747 aa).

Residues 1 to 32 (MTLITRVLNSNLPLRLSALKTVRQLQCGYSSH) constitute a mitochondrion transit peptide. In terms of domain architecture, tr-type G spans 42–319 (ERIRNIGISA…AIIDYLPNPG (278 aa)). Residues 51-58 (AHIDSGKT), 118-122 (DTPGH), and 172-175 (NKLD) each bind GTP.

It belongs to the TRAFAC class translation factor GTPase superfamily. Classic translation factor GTPase family. EF-G/EF-2 subfamily.

It is found in the mitochondrion. It functions in the pathway protein biosynthesis; polypeptide chain elongation. Its function is as follows. Mitochondrial GTPase that catalyzes the GTP-dependent ribosomal translocation step during translation elongation. During this step, the ribosome changes from the pre-translocational (PRE) to the post-translocational (POST) state as the newly formed A-site-bound peptidyl-tRNA and P-site-bound deacylated tRNA move to the P and E sites, respectively. Catalyzes the coordinated movement of the two tRNA molecules, the mRNA and conformational changes in the ribosome. Essential during development as it acts as a retrograde signal from mitochondria to the nucleus to slow down cell proliferation if mitochondrial energy output is low. In Drosophila virilis (Fruit fly), this protein is Elongation factor G, mitochondrial.